Reading from the N-terminus, the 369-residue chain is 3-methylarginine biosynthesis aminotransferase ArgM (369 aa).

K216 bears the N6-(pyridoxal phosphate)lysine mark.

It belongs to the class-I pyridoxal-phosphate-dependent aminotransferase family. It depends on pyridoxal 5'-phosphate as a cofactor.

The catalysed reaction is L-arginine + 2-oxoglutarate = 5-guanidino-2-oxopentanoate + L-glutamate. It catalyses the reaction (3R)-5-guanidino-3-methyl-2-oxopentanoate + L-aspartate = (3R)-3-methyl-L-arginine + oxaloacetate. Its pathway is antibiotic biosynthesis. Its function is as follows. Aminotransferase involved in the formation of the rare amino acid 3-methylarginine (MeArg), which is incorporated into the peptidyl nucleoside antibiotic arginomycin. Catalyzes two rounds of transamination: the transfer of the amino group from L-arginine to 2-oxoglutarate to give glutamate and 5-guanidino-2-oxopentanoic acid, which will be methylated by ArgN. Then, ArgM specifically catalyzes transamination from the donor L-aspartate to the 5-guanidino-3-methyl-2-oxopentanoic acid produced by ArgN, generating the final product, 3-methylarginine. Cannot use arginine analogs, such as D-arginine, L-homoarginine and N-methylarginine for the first transamination. The polypeptide is 3-methylarginine biosynthesis aminotransferase ArgM (Streptomyces arginensis).